The following is a 288-amino-acid chain: Fibroblast growth factor 2 (288 aa).

Positions 1-133 (MVGVGGGDVE…RGSRPGPAGT (133 aa)) are disordered. A propeptide spans 1 to 142 (MVGVGGGDVE…TMAAGSITTL (142 aa)) (or 93, or 124, or 125, or 131, or 161). A compositionally biased stretch (low complexity) spans 52–64 (SVNPRSRAAGSPR). Residues 68-84 (RRTEERPSGSRLGDRGR) show a composition bias toward basic and acidic residues. Residues arginine 108, arginine 110, and arginine 112 each carry the omega-N-methylarginine; alternate modification. Symmetric dimethylarginine; alternate occurs at positions 108, 110, and 112. The segment covering 113–132 (GTAAPRAAPAARGSRPGPAG) has biased composition (low complexity). Asparagine 169 contacts heparin. A Cell attachment site; atypical motif is present at residues 179–181 (DGR). Tyrosine 215 is subject to Phosphotyrosine; by TEC. The short motif at 221–223 (DGR) is the Cell attachment site; atypical element. Lysine 228 is covalently cross-linked (Glycyl lysine isopeptide (Lys-Gly) (interchain with G-Cter in SUMO1)). Residues 261–277 (KRTGQYKLGSKTGPGQK) are heparin-binding.

This sequence belongs to the heparin-binding growth factors family. Monomer. Homodimer. Interacts with FGFR1, FGFR2, FGFR3 and FGFR4. Affinity between fibroblast growth factors (FGFs) and their receptors is increased by heparan sulfate glycosaminoglycans that function as coreceptors. Interacts with CSPG4, FGFBP1 and TEC. Found in a complex with FGFBP1, FGF1 and FGF2. Interacts with FGFBP3. Interacts with integrin ITGAV:ITGB3; the interaction is required for FGF2 signaling. Interacts with SNORC (via the extracellular domain). Interacts with glypican GPC3. Phosphorylation at Tyr-215 regulates FGF2 unconventional secretion. In terms of processing, several N-termini starting at positions 94, 125, 126, 132, 143 and 162 have been identified by direct sequencing. As to expression, expressed in granulosa and cumulus cells. Expressed in hepatocellular carcinoma cells, but not in non-cancerous liver tissue.

It localises to the secreted. The protein localises to the nucleus. In terms of biological role, acts as a ligand for FGFR1, FGFR2, FGFR3 and FGFR4. Also acts as an integrin ligand which is required for FGF2 signaling. Binds to integrin ITGAV:ITGB3. Plays an important role in the regulation of cell survival, cell division, cell differentiation and cell migration. Functions as a potent mitogen in vitro. Can induce angiogenesis. Mediates phosphorylation of ERK1/2 and thereby promotes retinal lens fiber differentiation. The sequence is that of Fibroblast growth factor 2 (FGF2) from Homo sapiens (Human).